The chain runs to 173 residues: UPF0598 protein F59C6.12 (173 aa).

Belongs to the UPF0598 family.

This is UPF0598 protein F59C6.12 from Caenorhabditis elegans.